The following is a 232-amino-acid chain: Probable metallo-hydrolase M6_Spy0554 (232 aa).

H75, H77, D79, H80, H155, D174, and H215 together coordinate Zn(2+).

It depends on Zn(2+) as a cofactor.

This is Probable metallo-hydrolase M6_Spy0554 from Streptococcus pyogenes serotype M6 (strain ATCC BAA-946 / MGAS10394).